The following is a 1299-amino-acid chain: MAP3K epsilon protein kinase 1 (1299 aa).

In terms of domain architecture, Protein kinase spans 20 to 274 (YMLGDEIGKG…AKTLLSHPWI (255 aa)). HEAT repeat units follow at residues 25–62 (EIGK…EDLN) and 86–125 (LKTK…TVYI). ATP-binding positions include 26 to 34 (IGKGAYGRV) and Lys49. Asp144 serves as the catalytic Proton acceptor. One copy of the HEAT 3 repeat lies at 218–256 (PYYDLQPMPALFRIVQDDSPPIPDSLSPDITDFLRQCFK). 2 disordered regions span residues 291 to 458 (IRYM…GNEL) and 483 to 509 (GKLN…DGGK). Positions 374-385 (SSLQSSTCSISS) are enriched in low complexity. 2 stretches are compositionally biased toward polar residues: residues 415–432 (ATKQ…QRSH) and 488–501 (ASAS…NQGD). HEAT repeat units lie at residues 532–570 (SNDG…LLPL), 611–649 (VFVT…DNID), 653–694 (NACL…SSSL), 698–736 (MFIA…VFKL), 743–780 (NDFC…SGQL), 781–820 (DQHE…PDGD), 868–900 (QPEQ…HIAG), 901–939 (LEKH…AASA), 955–994 (SDTS…ADTT), 998–1036 (YMCS…DPNC), 1043–1081 (ADAI…INKR), 1085–1122 (QAAE…ASRN), 1125–1164 (EQLR…NDNR), 1186–1210 (CPER…RINT), 1211–1249 (TLAV…HHPR), and 1279–1299 (QVLV…NTVL). The tract at residues 795–852 (VLKTRPGGGEEPSNSQRSDLYQPDGDRPRSSSAALDATEDVKQHHRISISSNRTSTDK) is disordered.

This sequence belongs to the protein kinase superfamily. Ser/Thr protein kinase family. Autophosphorylated. In terms of tissue distribution, expressed in both the sporophytic and the gametophytic tissues, especially in dividing cells.

It is found in the cytoplasm. It localises to the cytoskeleton. The protein localises to the microtubule organizing center. The protein resides in the nucleus. Its subcellular location is the nucleolus. It is found in the cell membrane. The catalysed reaction is L-seryl-[protein] + ATP = O-phospho-L-seryl-[protein] + ADP + H(+). It catalyses the reaction L-threonyl-[protein] + ATP = O-phospho-L-threonyl-[protein] + ADP + H(+). In terms of biological role, serine/threonine-protein kinase involved in the spatial and temporal control system organizing cortical activities in mitotic and postmitotic cells. Required for the normal functioning of the plasma membrane in developing pollen. Involved in the regulation of cell expansion and embryo development. The chain is MAP3K epsilon protein kinase 1 from Brassica napus (Rape).